The following is a 228-amino-acid chain: Cytochrome c oxidase subunit 2 (228 aa).

The Mitochondrial intermembrane segment spans residues 1 to 26; it reads MATWANLGLQNSSSPLMEQLNFFHDH. Residues 27-48 traverse the membrane as a helical segment; the sequence is TVLILIMITVMITYVMGMLFFN. Topologically, residues 49-62 are mitochondrial matrix; it reads KFTNRYLLHGQTIE. Residues 63–82 traverse the membrane as a helical segment; that stretch reads IIWTILPAIILMFIAFPSLR. At 83 to 228 the chain is on the mitochondrial intermembrane side; sequence LLYLLDEINS…FIKWVSSQLN (146 aa). The Cu cation site is built by H161, C196, E198, C200, H204, and M207. Position 198 (E198) interacts with Mg(2+).

The protein belongs to the cytochrome c oxidase subunit 2 family. Component of the cytochrome c oxidase (complex IV, CIV), a multisubunit enzyme composed of a catalytic core of 3 subunits and several supernumerary subunits. The complex exists as a monomer or a dimer and forms supercomplexes (SCs) in the inner mitochondrial membrane with ubiquinol-cytochrome c oxidoreductase (cytochrome b-c1 complex, complex III, CIII). The cofactor is Cu cation.

Its subcellular location is the mitochondrion inner membrane. The catalysed reaction is 4 Fe(II)-[cytochrome c] + O2 + 8 H(+)(in) = 4 Fe(III)-[cytochrome c] + 2 H2O + 4 H(+)(out). In terms of biological role, component of the cytochrome c oxidase, the last enzyme in the mitochondrial electron transport chain which drives oxidative phosphorylation. The respiratory chain contains 3 multisubunit complexes succinate dehydrogenase (complex II, CII), ubiquinol-cytochrome c oxidoreductase (cytochrome b-c1 complex, complex III, CIII) and cytochrome c oxidase (complex IV, CIV), that cooperate to transfer electrons derived from NADH and succinate to molecular oxygen, creating an electrochemical gradient over the inner membrane that drives transmembrane transport and the ATP synthase. Cytochrome c oxidase is the component of the respiratory chain that catalyzes the reduction of oxygen to water. Electrons originating from reduced cytochrome c in the intermembrane space (IMS) are transferred via the dinuclear copper A center (CU(A)) of subunit 2 and heme A of subunit 1 to the active site in subunit 1, a binuclear center (BNC) formed by heme A3 and copper B (CU(B)). The BNC reduces molecular oxygen to 2 water molecules using 4 electrons from cytochrome c in the IMS and 4 protons from the mitochondrial matrix. This Culex quinquefasciatus (Southern house mosquito) protein is Cytochrome c oxidase subunit 2 (COII).